Reading from the N-terminus, the 209-residue chain is Ribulose-phosphate 3-epimerase (209 aa).

Position 8 (S8) interacts with substrate. Residues H33, D35, H64, and D170 each contribute to the a divalent metal cation site. Catalysis depends on D35, which acts as the Proton acceptor. Substrate contacts are provided by residues H64, 170 to 172 (DGG), and 191 to 192 (GS). D170 (proton donor) is an active-site residue.

The protein belongs to the ribulose-phosphate 3-epimerase family. The cofactor is a divalent metal cation.

The catalysed reaction is D-ribulose 5-phosphate = D-xylulose 5-phosphate. It participates in carbohydrate degradation. In terms of biological role, catalyzes the reversible epimerization of D-ribulose 5-phosphate to D-xylulose 5-phosphate. This is Ribulose-phosphate 3-epimerase from Mycoplasma genitalium (strain ATCC 33530 / DSM 19775 / NCTC 10195 / G37) (Mycoplasmoides genitalium).